We begin with the raw amino-acid sequence, 208 residues long: MDTFKQISGRIAPMLEPNIDTDVIMPKQFLKGIDRQGLDKGVFFDRRFMAGGQPNPDFILNMPGWQSATFLLVGPNFGCGSSREHAVWGLKQLGVRGLIGSTFAGIFDDNCQRNGILTVSLDEPALARLAQLAASADTNSITVSLDRCEITTAEETISFVISELKRAMLAVGEDAIAWTLQYLPEIENFEVAHYSRRPWLKRPASPLG.

It belongs to the LeuD family. LeuD type 1 subfamily. In terms of assembly, heterodimer of LeuC and LeuD.

The catalysed reaction is (2R,3S)-3-isopropylmalate = (2S)-2-isopropylmalate. Its pathway is amino-acid biosynthesis; L-leucine biosynthesis; L-leucine from 3-methyl-2-oxobutanoate: step 2/4. Its function is as follows. Catalyzes the isomerization between 2-isopropylmalate and 3-isopropylmalate, via the formation of 2-isopropylmaleate. In Salmonella choleraesuis (strain SC-B67), this protein is 3-isopropylmalate dehydratase small subunit 2.